The primary structure comprises 801 residues: MDPFNASWWTNMAWHGYSLSEDGTKFCEMLPTKINSFGLSEKILHKSVGLYFWEYPLPNLELIILSVFFFWQFFEILFKMSNIPIPKMPSMMLGCVVINLFSYTRPGSLLHRMFFPDDGRPKVAETGGAFGFVMYWFLKGVSIDVGMLRKTEPRAALIGFNTLVIPYISGYILMRTRKHFGKLAMTELQYQEIILLQSLSSFAGVNGLLTDLKINHSEFGRMVQSCAAVTDLVIFIMVSGTVLLKGQKGLPHGIVIVLVIGFLVYIVWPVMLWIIKQTPEGRLVKDVYIYLVMATAYFVYMFWLNFFQFSTYGWFIIGLATPAGPPLGSALIQRFECFNVGVLLPLFGSLSMEQLDISWLMREILNLKHMEGFAYEAISVILIVTVVKFVVTAITAFAVRIPYRDSIVLAMVLSNRSIFELGYLGYIVELKMFDNKSFTIAALSVLVSSLLTPIAIEFMYEPQHIFSSYRDRNMLTLKHDSKLKTLVCIHKPDHITSMVNFVELFNPTQESKLECNVLHLVELIGQAIPTFISHKMQKPKVGTRSCSRNVITAFLSLRRHLTKEAISIDIFTSASLVEHMHEDLCWLALDKNVALVVLPFHRSWSVDRSTIVSDDKAMQNLNHKVLKRASCSVGIFVYRKPLWESQMHGSCYKVCAIVVGGKDDKEALAFTNRMRRNKQTSVTILHLIPQLTTEESEDSVQKLDYDDIKEIMKTEDSNENDSWICIEKSVKEGAETSVILRSIAYDYDLFIVGRSSGMNSAVTKGLNEWTEFEELGALGDVIASKEFPSRASVLVLQQQQY.

Helical transmembrane passes span 58–78 (PNLELIILSVFFFWQFFEILF), 83–103 (IPIPKMPSMMLGCVVINLFSY), 128–148 (GAFGFVMYWFLKGVSIDVGML), 154–174 (RAALIGFNTLVIPYISGYILM), 192–212 (EIILLQSLSSFAGVNGLLTDL), 223–243 (VQSCAAVTDLVIFIMVSGTVL), 254–274 (IVIVLVIGFLVYIVWPVMLWI), 287–307 (VYIYLVMATAYFVYMFWLNFF), 312–332 (YGWFIIGLATPAGPPLGSALI), 340–360 (VGVLLPLFGSLSMEQLDISWL), 377–397 (AISVILIVTVVKFVVTAITAF), 407–427 (IVLAMVLSNRSIFELGYLGYI), and 438–458 (FTIAALSVLVSSLLTPIAIEF).

The protein belongs to the monovalent cation:proton antiporter 2 (CPA2) transporter (TC 2.A.37) family. CHX (TC 2.A.37.4) subfamily. Expressed in pollen.

It localises to the membrane. Functionally, may operate as a cation/H(+) antiporter. The protein is Cation/H(+) antiporter 7 (CHX7) of Arabidopsis thaliana (Mouse-ear cress).